The following is a 703-amino-acid chain: 1,4-alpha-glucan-branching enzyme (703 aa).

Trp93 and Lys130 together coordinate (1,4-alpha-D-glucosyl)n. Asp355 (nucleophile) is an active-site residue. Glu415 (proton donor) is an active-site residue.

It belongs to the glycosyl hydrolase 13 family. GlgB subfamily.

It localises to the cytoplasm. It catalyses the reaction Transfers a segment of a (1-&gt;4)-alpha-D-glucan chain to a primary hydroxy group in a similar glucan chain.. It participates in glycan biosynthesis; glycogen biosynthesis. Its function is as follows. Glycogen-branching enzyme participates in the glycogen biosynthetic process along with glycogenin and glycogen synthase. Generates alpha-1,6-glucosidic branches from alpha-1,4-linked glucose chains, to increase solubility of the glycogen polymer. This is 1,4-alpha-glucan-branching enzyme (GLC3) from Eremothecium gossypii (strain ATCC 10895 / CBS 109.51 / FGSC 9923 / NRRL Y-1056) (Yeast).